A 776-amino-acid chain; its full sequence is Probable E3 ubiquitin-protein ligase HECTD2 (776 aa).

The interval 1–46 (MSEAVRVPSPATPLVVAAAAPEERKGKESEREKLPPIVSAGAGATA) is disordered. Over residues 7–20 (VPSPATPLVVAAAA) the composition is skewed to low complexity. Serine 9 is modified (phosphoserine). Positions 21-34 (PEERKGKESEREKL) are enriched in basic and acidic residues. The HECT domain occupies 437–776 (KRADLKKKLK…ISNSEGFGLE (340 aa)). Catalysis depends on cysteine 744, which acts as the Glycyl thioester intermediate.

The catalysed reaction is S-ubiquitinyl-[E2 ubiquitin-conjugating enzyme]-L-cysteine + [acceptor protein]-L-lysine = [E2 ubiquitin-conjugating enzyme]-L-cysteine + N(6)-ubiquitinyl-[acceptor protein]-L-lysine.. The protein operates within protein modification; protein ubiquitination. Functionally, E3 ubiquitin-protein ligase which accepts ubiquitin from an E2 ubiquitin-conjugating enzyme in the form of a thioester and then directly transfers the ubiquitin to targeted substrates. The chain is Probable E3 ubiquitin-protein ligase HECTD2 (HECTD2) from Pongo abelii (Sumatran orangutan).